We begin with the raw amino-acid sequence, 470 residues long: Siroheme synthase (470 aa).

A precorrin-2 dehydrogenase /sirohydrochlorin ferrochelatase region spans residues 1 to 213 (MSDATDPGWF…GEHAAARQVL (213 aa)). NAD(+)-binding positions include 28 to 29 (GI) and 49 to 50 (PR). Positions 224 to 470 (GEVWLVGAGP…VVTPPPLSGT (247 aa)) are uroporphyrinogen-III C-methyltransferase. Position 233 (P233) interacts with S-adenosyl-L-methionine. D256 (proton acceptor) is an active-site residue. K278 acts as the Proton donor in catalysis. Residues 309-311 (GGD), I314, 339-340 (TA), M392, and G421 each bind S-adenosyl-L-methionine.

It in the N-terminal section; belongs to the precorrin-2 dehydrogenase / sirohydrochlorin ferrochelatase family. In the C-terminal section; belongs to the precorrin methyltransferase family.

The catalysed reaction is uroporphyrinogen III + 2 S-adenosyl-L-methionine = precorrin-2 + 2 S-adenosyl-L-homocysteine + H(+). It catalyses the reaction precorrin-2 + NAD(+) = sirohydrochlorin + NADH + 2 H(+). The enzyme catalyses siroheme + 2 H(+) = sirohydrochlorin + Fe(2+). It participates in cofactor biosynthesis; adenosylcobalamin biosynthesis; precorrin-2 from uroporphyrinogen III: step 1/1. It functions in the pathway cofactor biosynthesis; adenosylcobalamin biosynthesis; sirohydrochlorin from precorrin-2: step 1/1. Its pathway is porphyrin-containing compound metabolism; siroheme biosynthesis; precorrin-2 from uroporphyrinogen III: step 1/1. The protein operates within porphyrin-containing compound metabolism; siroheme biosynthesis; siroheme from sirohydrochlorin: step 1/1. It participates in porphyrin-containing compound metabolism; siroheme biosynthesis; sirohydrochlorin from precorrin-2: step 1/1. Its function is as follows. Multifunctional enzyme that catalyzes the SAM-dependent methylations of uroporphyrinogen III at position C-2 and C-7 to form precorrin-2 via precorrin-1. Then it catalyzes the NAD-dependent ring dehydrogenation of precorrin-2 to yield sirohydrochlorin. Finally, it catalyzes the ferrochelation of sirohydrochlorin to yield siroheme. This chain is Siroheme synthase, found in Gluconacetobacter diazotrophicus (strain ATCC 49037 / DSM 5601 / CCUG 37298 / CIP 103539 / LMG 7603 / PAl5).